Here is a 287-residue protein sequence, read N- to C-terminus: ATP synthase gamma chain (287 aa).

The protein belongs to the ATPase gamma chain family. As to quaternary structure, F-type ATPases have 2 components, CF(1) - the catalytic core - and CF(0) - the membrane proton channel. CF(1) has five subunits: alpha(3), beta(3), gamma(1), delta(1), epsilon(1). CF(0) has three main subunits: a, b and c.

It localises to the cell inner membrane. Its function is as follows. Produces ATP from ADP in the presence of a proton gradient across the membrane. The gamma chain is believed to be important in regulating ATPase activity and the flow of protons through the CF(0) complex. The polypeptide is ATP synthase gamma chain (Ruthia magnifica subsp. Calyptogena magnifica).